We begin with the raw amino-acid sequence, 476 residues long: POC1 centriolar protein homolog B (476 aa).

WD repeat units lie at residues 16–55 (GHKA…RAYR), 58–97 (GHKD…KSSE), 100–139 (AHTA…FLYS), 142–181 (RHTH…CVNN), 183–223 (SDSV…LLQH), 226–265 (VHSC…LIYT), and 268–307 (GHTG…LHCK). The stretch at 429-468 (ALEHIMEQLNILTQTVSILEQRLSLTEDKLRDCLENQQKL) forms a coiled coil.

It belongs to the WD repeat POC1 family. As to quaternary structure, interacts with POC1A. Interacts with FAM161A. Interacts with CEP44; the interaction is direct and recruits POC1B to centriolar microtubules. Forms a microtubule-associated complex with POC5, CETN2 and FAM161A. Interacts with CCDC15. Phosphorylated in mitotic cells that may be mediated by CDK1. Expressed in the retina.

Its subcellular location is the cytoplasm. It is found in the cytoskeleton. The protein localises to the microtubule organizing center. It localises to the centrosome. The protein resides in the centriole. Its subcellular location is the cilium basal body. It is found in the spindle pole. Plays an important role in centriole assembly and/or stability and ciliogenesis. Involved in early steps of centriole duplication, as well as in the later steps of centriole length control. Acts in concert with POC1A to ensure centriole integrity and proper mitotic spindle formation. Required for primary cilia formation, ciliary length and also cell proliferation. Required for retinal integrity. Acts as a positive regulator of centriole elongation. This chain is POC1 centriolar protein homolog B (Poc1b), found in Mus musculus (Mouse).